We begin with the raw amino-acid sequence, 459 residues long: U-box domain-containing protein 75 (459 aa).

A U-box domain is found at 64–138 (AVPAVFICPI…AAWFSRRYTR (75 aa)). 2 ARM repeats span residues 188–229 (QSVT…GVPL) and 231–270 (ADAK…ILME).

In terms of assembly, interacts with GPA1. In terms of tissue distribution, expressed highly in panicles at flowering time, at moderate levels in vegetative shoot apices, leaf sheaths, leaf blades, and elongating internodes, and at low levels in roots.

It localises to the cell membrane. It catalyses the reaction S-ubiquitinyl-[E2 ubiquitin-conjugating enzyme]-L-cysteine + [acceptor protein]-L-lysine = [E2 ubiquitin-conjugating enzyme]-L-cysteine + N(6)-ubiquitinyl-[acceptor protein]-L-lysine.. Its pathway is protein modification; protein ubiquitination. Its function is as follows. E3 ubiquitin ligase that may function as positive regulator of brassinosteroid (BR) signaling. Possesses E3 ubiquitin ligase in vitro. Acts together with the heterotrimeric G alpha subunit GPA1 at the plasma membrane to mediate a BR signaling pathway that affects plant growth and development. Does not seem to be involved in gibberellin or cytokinin responses. The protein is U-box domain-containing protein 75 of Oryza sativa subsp. japonica (Rice).